Reading from the N-terminus, the 310-residue chain is Putative carboxypeptidase SCO6489 (310 aa).

S116 (nucleophile) is an active-site residue. Catalysis depends on charge relay system residues E212 and H277.

Belongs to the peptidase S66 family.

The sequence is that of Putative carboxypeptidase SCO6489 from Streptomyces coelicolor (strain ATCC BAA-471 / A3(2) / M145).